The following is an 892-amino-acid chain: Formin-like protein 8 (892 aa).

An N-terminal signal peptide occupies residues 1–23; sequence MPPAIARFVAIAAVLLCGHVAVA. Positions 43 to 119 are disordered; the sequence is FPIEWTPPPS…SGSGSGHHGG (77 aa). Over residues 47-59 the composition is skewed to pro residues; the sequence is WTPPPSPPPPPAP. Low complexity predominate over residues 87–111; sequence TTPTSPGTTPSPTTVAADVSKTPSG. The chain crosses the membrane as a helical span at residues 126–146; sequence IVAAGAGAAAAVALLGFACAF. The segment at 188–457 is disordered; that stretch reads PTTPARHHGP…GSGEPRPKLK (270 aa). Residues 210-230 are compositionally biased toward basic and acidic residues; sequence LRSERARRGVSRDEDADHPSP. 3 stretches are compositionally biased toward low complexity: residues 268–286, 297–306, and 321–330; these read AEAW…TTAS, FFPPVAAIAA, and RTRFSTGSTP. Positions 339-383 are enriched in pro residues; sequence SPRPVQPSNAPPPPPPPPPPPPPPPPPKLNTAPKPPPPPPPPPSV. The segment covering 424 to 436 has biased composition (polar residues); that stretch reads AATTVDNNGSTSM. The FH2 domain maps to 446–867; the sequence is DGGSGEPRPK…GSARSFRISA (422 aa).

Belongs to the formin-like family. Class-I subfamily.

It is found in the membrane. The protein is Formin-like protein 8 (FH8) of Oryza sativa subsp. japonica (Rice).